A 96-amino-acid polypeptide reads, in one-letter code: Co-chaperonin GroES (96 aa).

Belongs to the GroES chaperonin family. As to quaternary structure, heptamer of 7 subunits arranged in a ring. Interacts with the chaperonin GroEL.

The protein resides in the cytoplasm. In terms of biological role, together with the chaperonin GroEL, plays an essential role in assisting protein folding. The GroEL-GroES system forms a nano-cage that allows encapsulation of the non-native substrate proteins and provides a physical environment optimized to promote and accelerate protein folding. GroES binds to the apical surface of the GroEL ring, thereby capping the opening of the GroEL channel. The chain is Co-chaperonin GroES from Geotalea uraniireducens (strain Rf4) (Geobacter uraniireducens).